We begin with the raw amino-acid sequence, 418 residues long: Ciliary microtubule-associated protein 2 (418 aa).

Sperm.

This Homo sapiens (Human) protein is Ciliary microtubule-associated protein 2.